Consider the following 462-residue polypeptide: Myrosinase-binding protein 1 (462 aa).

The interval 1 to 23 (MSTGGPQKLEAQGGKEGKEWDDG) is disordered. Jacalin-type lectin domains lie at 6–148 (PQKL…YFAP), 157–300 (PNKV…YFAP), and 310–453 (TKKL…HIVP). The span at 13-23 (GGKEGKEWDDG) shows a compositional bias: basic and acidic residues.

This sequence belongs to the jacalin lectin family. Expressed exclusively in flowers, in male and female organs, petals and pedicels. Not detected in pollen grains or sepals.

The sequence is that of Myrosinase-binding protein 1 (MBP1) from Arabidopsis thaliana (Mouse-ear cress).